A 222-amino-acid polypeptide reads, in one-letter code: UPF0688 protein C1orf174 homolog (222 aa).

2 disordered regions span residues 23–57 (STSL…RTSK) and 98–158 (EDGA…EPVP). A compositionally biased stretch (polar residues) spans 33-48 (ASSTSAKTTCLASSSH). Positions 121 to 131 (VSEEPSVKAEE) are enriched in basic and acidic residues. Ser-172 is modified (phosphoserine).

Belongs to the UPF0688 family.

The protein resides in the nucleus. The chain is UPF0688 protein C1orf174 homolog from Rattus norvegicus (Rat).